Consider the following 676-residue polypeptide: DNA ligase (676 aa).

Residues 35 to 39, 84 to 85, and E115 each bind NAD(+); these read DAVYD and SL. The active-site N6-AMP-lysine intermediate is K117. NAD(+)-binding residues include R138, E177, K296, and K320. Zn(2+)-binding residues include C414, C417, C432, and C437. The BRCT domain occupies 599–676; sequence NANLKLVGKT…SEAELLKILA (78 aa).

This sequence belongs to the NAD-dependent DNA ligase family. LigA subfamily. Requires Mg(2+) as cofactor. Mn(2+) serves as cofactor.

It catalyses the reaction NAD(+) + (deoxyribonucleotide)n-3'-hydroxyl + 5'-phospho-(deoxyribonucleotide)m = (deoxyribonucleotide)n+m + AMP + beta-nicotinamide D-nucleotide.. DNA ligase that catalyzes the formation of phosphodiester linkages between 5'-phosphoryl and 3'-hydroxyl groups in double-stranded DNA using NAD as a coenzyme and as the energy source for the reaction. It is essential for DNA replication and repair of damaged DNA. The polypeptide is DNA ligase (Trichormus variabilis (strain ATCC 29413 / PCC 7937) (Anabaena variabilis)).